The chain runs to 329 residues: Ketol-acid reductoisomerase (NADP(+)) (329 aa).

Positions 2 to 182 constitute a KARI N-terminal Rossmann domain; it reads TQLFYDTDAD…GGTRAGILET (181 aa). NADP(+)-binding positions include 25 to 28, Ser51, Ser53, and 83 to 86; these read YGSQ and DEFQ. The active site involves His108. NADP(+) is bound at residue Gly134. The KARI C-terminal knotted domain maps to 183-328; it reads NFKEETETDL…KGLRSMFSWL (146 aa). Mg(2+)-binding residues include Asp191, Glu195, Glu227, and Glu231. Ser252 provides a ligand contact to substrate.

This sequence belongs to the ketol-acid reductoisomerase family. It depends on Mg(2+) as a cofactor.

The catalysed reaction is (2R)-2,3-dihydroxy-3-methylbutanoate + NADP(+) = (2S)-2-acetolactate + NADPH + H(+). The enzyme catalyses (2R,3R)-2,3-dihydroxy-3-methylpentanoate + NADP(+) = (S)-2-ethyl-2-hydroxy-3-oxobutanoate + NADPH + H(+). It participates in amino-acid biosynthesis; L-isoleucine biosynthesis; L-isoleucine from 2-oxobutanoate: step 2/4. It functions in the pathway amino-acid biosynthesis; L-valine biosynthesis; L-valine from pyruvate: step 2/4. Involved in the biosynthesis of branched-chain amino acids (BCAA). Catalyzes an alkyl-migration followed by a ketol-acid reduction of (S)-2-acetolactate (S2AL) to yield (R)-2,3-dihydroxy-isovalerate. In the isomerase reaction, S2AL is rearranged via a Mg-dependent methyl migration to produce 3-hydroxy-3-methyl-2-ketobutyrate (HMKB). In the reductase reaction, this 2-ketoacid undergoes a metal-dependent reduction by NADPH to yield (R)-2,3-dihydroxy-isovalerate. This is Ketol-acid reductoisomerase (NADP(+)) from Prochlorococcus marinus (strain AS9601).